The following is a 37-amino-acid chain: Omega/M-ectatotoxin-Et1a subunit A (37 aa).

An intrachain disulfide couples Cys12 to Cys34.

The protein belongs to the ectatomin family. Ectatomin-Et subfamily. In terms of assembly, heterodimer of an A and a B chain; disulfide-linked. As to expression, expressed by the venom gland.

The protein resides in the secreted. The protein localises to the target cell membrane. Functionally, algogenic for animals, human and insects. At high concentrations (0.5-1 uM), it acts as a pore-forming protein that forms nonselective cation channels both in cell and artificial membranes. It is weakly selective for cation over anions channel conductance is identical in both directions. At lower concentrations (1-10 nM), this heterodimer inhibits cardiac L-type calcium currents in isolated rat cardiac ventricular myocytes. The protein is Omega/M-ectatotoxin-Et1a subunit A of Ectatomma tuberculatum (Selva ant).